The sequence spans 489 residues: Glycogen synthase (489 aa).

R20 contributes to the ADP-alpha-D-glucose binding site.

It belongs to the glycosyltransferase 1 family. Bacterial/plant glycogen synthase subfamily.

It catalyses the reaction [(1-&gt;4)-alpha-D-glucosyl](n) + ADP-alpha-D-glucose = [(1-&gt;4)-alpha-D-glucosyl](n+1) + ADP + H(+). It functions in the pathway glycan biosynthesis; glycogen biosynthesis. In terms of biological role, synthesizes alpha-1,4-glucan chains using ADP-glucose. The sequence is that of Glycogen synthase from Pelodictyon phaeoclathratiforme (strain DSM 5477 / BU-1).